A 287-amino-acid chain; its full sequence is Light-independent protochlorophyllide reductase iron-sulfur ATP-binding protein (287 aa).

ATP-binding positions include 10–15 (GVGKST) and K39. S14 contributes to the Mg(2+) binding site. [4Fe-4S] cluster-binding residues include C95 and C129. 181–182 (NR) is an ATP binding site.

The protein belongs to the NifH/BchL/ChlL family. In terms of assembly, homodimer. Protochlorophyllide reductase is composed of three subunits; BchL, BchN and BchB. The cofactor is [4Fe-4S] cluster.

The catalysed reaction is chlorophyllide a + oxidized 2[4Fe-4S]-[ferredoxin] + 2 ADP + 2 phosphate = protochlorophyllide a + reduced 2[4Fe-4S]-[ferredoxin] + 2 ATP + 2 H2O. It participates in porphyrin-containing compound metabolism; bacteriochlorophyll biosynthesis (light-independent). Component of the dark-operative protochlorophyllide reductase (DPOR) that uses Mg-ATP and reduced ferredoxin to reduce ring D of protochlorophyllide (Pchlide) to form chlorophyllide a (Chlide). This reaction is light-independent. The L component serves as a unique electron donor to the NB-component of the complex, and binds Mg-ATP. This Heliobacterium modesticaldum (strain ATCC 51547 / Ice1) protein is Light-independent protochlorophyllide reductase iron-sulfur ATP-binding protein.